A 251-amino-acid chain; its full sequence is Protein unc-119 homolog B (251 aa).

The tract at residues 1 to 28 is disordered; it reads MSGSNPKAAAAASAAGPGGLVAGKEEKK. N-acetylserine is present on Ser2. Lys24 bears the N6-acetyllysine mark. Residue Tyr142 coordinates tetradecanoate.

The protein belongs to the PDE6D/unc-119 family. Found in a complex with ARL3, RP2 and UNC119B; RP2 induces hydrolysis of GTP ARL3 in the complex, leading to the release of UNC119B. Interacts with NPHP3 (when myristoylated). Interacts with CYS1 (when myristoylated). Interacts with MACIR; interaction only takes place when UNC119B is not liganded with myristoylated proteins.

The protein resides in the cell projection. It is found in the cilium. Myristoyl-binding protein that acts as a cargo adapter: specifically binds the myristoyl moiety of a subset of N-terminally myristoylated proteins and is required for their localization. Binds myristoylated NPHP3 and plays a key role in localization of NPHP3 to the primary cilium membrane. Does not bind all myristoylated proteins. Probably plays a role in trafficking proteins in photoreceptor cells. The protein is Protein unc-119 homolog B (UNC119B) of Homo sapiens (Human).